The chain runs to 375 residues: Chaperone protein DnaJ (375 aa).

A J domain is found at 6 to 71 (DYYEVLGVPK…EKRRQYDQFG (66 aa)). Residues 138-220 (GTTKKIDVTL…CYGTGYISSK (83 aa)) form a CR-type zinc finger. Residues Cys151, Cys154, Cys168, Cys171, Cys194, Cys197, Cys208, and Cys211 each coordinate Zn(2+). CXXCXGXG motif repeat units follow at residues 151–158 (CSSCHGTG), 168–175 (CSKCGGRG), 194–201 (CPDCHGTG), and 208–215 (CPDCYGTG).

It belongs to the DnaJ family. As to quaternary structure, homodimer. Requires Zn(2+) as cofactor.

It is found in the cytoplasm. In terms of biological role, participates actively in the response to hyperosmotic and heat shock by preventing the aggregation of stress-denatured proteins and by disaggregating proteins, also in an autonomous, DnaK-independent fashion. Unfolded proteins bind initially to DnaJ; upon interaction with the DnaJ-bound protein, DnaK hydrolyzes its bound ATP, resulting in the formation of a stable complex. GrpE releases ADP from DnaK; ATP binding to DnaK triggers the release of the substrate protein, thus completing the reaction cycle. Several rounds of ATP-dependent interactions between DnaJ, DnaK and GrpE are required for fully efficient folding. Also involved, together with DnaK and GrpE, in the DNA replication of plasmids through activation of initiation proteins. The protein is Chaperone protein DnaJ of Lachnospira eligens (strain ATCC 27750 / DSM 3376 / VPI C15-48 / C15-B4) (Eubacterium eligens).